The sequence spans 237 residues: Small ribosomal subunit protein uS17m (237 aa).

Belongs to the universal ribosomal protein uS17 family. In terms of assembly, component of the mitochondrial small ribosomal subunit (mt-SSU). Mature yeast 74S mitochondrial ribosomes consist of a small (37S) and a large (54S) subunit. The 37S small subunit contains a 15S ribosomal RNA (15S mt-rRNA) and 34 different proteins. The 54S large subunit contains a 21S rRNA (21S mt-rRNA) and 46 different proteins.

It is found in the mitochondrion. Component of the mitochondrial ribosome (mitoribosome), a dedicated translation machinery responsible for the synthesis of mitochondrial genome-encoded proteins, including at least some of the essential transmembrane subunits of the mitochondrial respiratory chain. The mitoribosomes are attached to the mitochondrial inner membrane and translation products are cotranslationally integrated into the membrane. uS17m may have a meiosis-specific role as it accumulates during the middle stage of sporulation. The polypeptide is Small ribosomal subunit protein uS17m (MRPS17) (Saccharomyces cerevisiae (strain ATCC 204508 / S288c) (Baker's yeast)).